A 391-amino-acid chain; its full sequence is Casein kinase II subunit alpha (391 aa).

The interaction with beta subunit stretch occupies residues 36–41; the sequence is QDDYQL. One can recognise a Protein kinase domain in the interval 39–324; the sequence is YQLVRKLGRG…AREAMEHPYF (286 aa). Residues 45–53 and lysine 68 contribute to the ATP site; that span reads LGRGKYSEV. Aspartate 156 functions as the Proton acceptor in the catalytic mechanism. A phosphothreonine; by CDK1 mark is found at threonine 344 and threonine 360. Phosphoserine; by CDK1 is present on residues serine 362 and serine 370.

Belongs to the protein kinase superfamily. Ser/Thr protein kinase family. CK2 subfamily. As to quaternary structure, heterotetramer composed of two catalytic subunits (alpha chain and/or alpha' chain) and two regulatory subunits (beta chains). The tetramer can exist as a combination of 2 alpha/2 beta, 2 alpha'/2 beta or 1 alpha/1 alpha'/2 beta subunits. Also part of a CK2-SPT16-SSRP1 complex composed of SSRP1, SUPT16H, CSNK2A1, CSNK2A2 and CSNK2B, which forms following UV irradiation. Interacts with RNPS1. Interacts with SNAI1. Interacts with PML. Interacts with CCAR2. Interacts with HIRIP3. Post-translationally, phosphorylated at Thr-344, Thr-360, Ser-362 and Ser-370 by CDK1 in prophase and metaphase and dephosphorylated during anaphase. Phosphorylation does not directly affect casein kinase 2 activity, but may contribute to its regulation by forming binding sites for interacting proteins and/or targeting it to different compartments.

It is found in the nucleus. The catalysed reaction is L-seryl-[protein] + ATP = O-phospho-L-seryl-[protein] + ADP + H(+). It catalyses the reaction L-threonyl-[protein] + ATP = O-phospho-L-threonyl-[protein] + ADP + H(+). With respect to regulation, constitutively active protein kinase whose activity is not directly affected by phosphorylation. Seems to be regulated by level of expression and localization. In terms of biological role, catalytic subunit of a constitutively active serine/threonine-protein kinase complex that phosphorylates a large number of substrates containing acidic residues C-terminal to the phosphorylated serine or threonine. Regulates numerous cellular processes, such as cell cycle progression, apoptosis and transcription, as well as viral infection. May act as a regulatory node which integrates and coordinates numerous signals leading to an appropriate cellular response. During mitosis, functions as a component of the p53/TP53-dependent spindle assembly checkpoint (SAC) that maintains cyclin-B-CDK1 activity and G2 arrest in response to spindle damage. Also required for p53/TP53-mediated apoptosis, phosphorylating 'Ser-392' of p53/TP53 following UV irradiation. Phosphorylates a number of DNA repair proteins in response to DNA damage, such as MDC1, MRE11, RAD9A, RAD51 and HTATSF1, promoting their recruitment to DNA damage sites. Can also negatively regulate apoptosis. Phosphorylates the caspases CASP9 and CASP2 and the apoptotic regulator NOL3. Phosphorylation protects CASP9 from cleavage and activation by CASP8, and inhibits the dimerization of CASP2 and activation of CASP8. Phosphorylates YY1, protecting YY1 from cleavage by CASP7 during apoptosis. Regulates transcription by direct phosphorylation of RNA polymerases I, II, III and IV. Also phosphorylates and regulates numerous transcription factors including NF-kappa-B, STAT1, CREB1, IRF1, IRF2, ATF1, ATF4, SRF, MAX, JUN, FOS, MYC and MYB. Phosphorylates Hsp90 and its co-chaperones FKBP4 and CDC37, which is essential for chaperone function. Mediates sequential phosphorylation of FNIP1, promoting its gradual interaction with Hsp90, leading to activate both kinase and non-kinase client proteins of Hsp90. Regulates Wnt signaling by phosphorylating CTNNB1 and the transcription factor LEF1. Acts as an ectokinase that phosphorylates several extracellular proteins. Phosphorylates PML at 'Ser-565' and primes it for ubiquitin-mediated degradation. Plays an important role in the circadian clock function by phosphorylating BMAL1 at 'Ser-90' which is pivotal for its interaction with CLOCK and which controls CLOCK nuclear entry. Phosphorylates FMR1, promoting FMR1-dependent formation of a membraneless compartment. May phosphorylate histone H2A on 'Ser-1'. This Mus musculus (Mouse) protein is Casein kinase II subunit alpha (Csnk2a1).